A 218-amino-acid chain; its full sequence is Histidine biosynthesis bifunctional protein HisIE (218 aa).

A phosphoribosyl-AMP cyclohydrolase region spans residues 1-118 (MTDLSELNFD…DAPDTGLDGT (118 aa)). Residues 119-218 (LERVYATITE…SGLKGPKEVG (100 aa)) are phosphoribosyl-ATP pyrophosphohydrolase.

It in the N-terminal section; belongs to the PRA-CH family. In the C-terminal section; belongs to the PRA-PH family.

The protein localises to the cytoplasm. The enzyme catalyses 1-(5-phospho-beta-D-ribosyl)-ATP + H2O = 1-(5-phospho-beta-D-ribosyl)-5'-AMP + diphosphate + H(+). It carries out the reaction 1-(5-phospho-beta-D-ribosyl)-5'-AMP + H2O = 1-(5-phospho-beta-D-ribosyl)-5-[(5-phospho-beta-D-ribosylamino)methylideneamino]imidazole-4-carboxamide. It functions in the pathway amino-acid biosynthesis; L-histidine biosynthesis; L-histidine from 5-phospho-alpha-D-ribose 1-diphosphate: step 2/9. The protein operates within amino-acid biosynthesis; L-histidine biosynthesis; L-histidine from 5-phospho-alpha-D-ribose 1-diphosphate: step 3/9. The protein is Histidine biosynthesis bifunctional protein HisIE (hisI) of Deinococcus radiodurans (strain ATCC 13939 / DSM 20539 / JCM 16871 / CCUG 27074 / LMG 4051 / NBRC 15346 / NCIMB 9279 / VKM B-1422 / R1).